The primary structure comprises 211 residues: MARRAQRKAERAKVKQWYKVLAPEMFGRTPVGETLANDPNKLLGRVIETTLGDLTNNFSKQNTKLRFKIDAVAGDTAYTKFIGHEMTTDYIRSLVKRRTSRIDAVVDVTTSDGYLVRVKPSCFTVKRARANQVKAIREISRQVIISRAGNIDLNGLIQEVVLGKLSLDIYKDAKAVYPLRRVEIRKTEILAGPGEVPHPAAVPEPTVTAGS.

This sequence belongs to the eukaryotic ribosomal protein eS1 family.

This Methanothrix thermoacetophila (strain DSM 6194 / JCM 14653 / NBRC 101360 / PT) (Methanosaeta thermophila) protein is Small ribosomal subunit protein eS1.